The sequence spans 838 residues: V-type proton ATPase 116 kDa subunit a 1 (838 aa).

Residues 1 to 388 lie on the Cytoplasmic side of the membrane; the sequence is MGELFRSEEM…DAYGIGTYRE (388 aa). A phosphothreonine mark is found at threonine 250 and threonine 360. Tyrosine 364 carries the phosphotyrosine modification. The helical transmembrane segment at 389–407 threads the bilayer; sequence INPAPYTVITFPFLFAVMF. Residues 408–409 are Vacuolar-facing; sequence GD. The helical transmembrane segment at 410-426 threads the bilayer; sequence FGHGILMTLFAVWMVLR. Over 427–441 the chain is Cytoplasmic; it reads ESRILSQKNENEMFS. The chain crosses the membrane as a helical span at residues 442 to 471; sequence MVFSGRYIILLMGLFSIYTGLIYNDCFSKS. At 472-535 the chain is on the vacuolar side; it reads LNIFGSSWSV…ATNKLTFLNS (64 aa). Residues 536 to 555 traverse the membrane as a helical segment; that stretch reads FKMKMSVILGIIHMLFGVSL. Residues 556–573 lie on the Cytoplasmic side of the membrane; sequence SLFNHIYFKKPLNIYFGF. The helical transmembrane segment at 574–594 threads the bilayer; that stretch reads IPEIIFMSSLFGYLVILIFYK. Topologically, residues 595 to 639 are vacuolar; it reads WTAYDAHSSRNAPSLLIHFINMFLFSYPESGNAMLYSGQKGIQCF. The chain crosses the membrane as a helical span at residues 640–659; sequence LIVVAMLCVPWMLLFKPLIL. At 660 to 725 the chain is on the cytoplasmic side; that stretch reads RHQYLRKKHL…DTMVHQAIHT (66 aa). A helical membrane pass occupies residues 726-750; it reads IEYCLGCISNTASYLRLWALSLAHA. At 751-771 the chain is on the vacuolar side; sequence QLSEVLWTMVIHIGLHVRSLA. The chain crosses the membrane as a helical span at residues 772–810; the sequence is GGLGLFFIFAAFATLTVAILLIMEGLSAFLHALRLHWVE. The Cytoplasmic portion of the chain corresponds to 811 to 838; it reads FQNKFYTGTGFKFLPFSFEHIREGKFDE.

It belongs to the V-ATPase 116 kDa subunit family. V-ATPase is a heteromultimeric enzyme made up of two complexes: the ATP-hydrolytic V1 complex and the proton translocation V0 complex. The V1 complex consists of three catalytic AB heterodimers that form a heterohexamer, three peripheral stalks each consisting of EG heterodimers, one central rotor including subunits D and F, and the regulatory subunits C and H. The proton translocation complex V0 consists of the proton transport subunit a, a ring of proteolipid subunits c9c'', rotary subunit d, subunits e and f, and the accessory subunits ATP6AP1/Ac45 and ATP6AP2/PRR. Interacts with SPAAR. Expressed in brain (at protein level). In terms of tissue distribution, expressed in heart, kidney, liver, spleen, and to a lesser extent in brain.

Its subcellular location is the cytoplasmic vesicle. The protein localises to the clathrin-coated vesicle membrane. It localises to the secretory vesicle. It is found in the synaptic vesicle membrane. The protein resides in the melanosome. Subunit of the V0 complex of vacuolar(H+)-ATPase (V-ATPase), a multisubunit enzyme composed of a peripheral complex (V1) that hydrolyzes ATP and a membrane integral complex (V0) that translocates protons. V-ATPase is responsible for the acidification of various organelles, such as lysosomes, endosomes, the trans-Golgi network, and secretory granules, including synaptic vesicles. In certain cell types, can be exported to the plasma membrane, where it is involved in the acidification of the extracellular environment. Required for assembly and activity of the vacuolar ATPase. Through its action on compartment acidification, plays an essential role in neuronal development in terms of integrity and connectivity of neurons. This is V-type proton ATPase 116 kDa subunit a 1 (Atp6v0a1) from Rattus norvegicus (Rat).